A 2677-amino-acid chain; its full sequence is Probable helicase senataxin (2677 aa).

Residue lysine 339 forms a Glycyl lysine isopeptide (Lys-Gly) (interchain with G-Cter in SUMO1) linkage. Serine 615, serine 642, and serine 878 each carry phosphoserine. Residue lysine 894 forms a Glycyl lysine isopeptide (Lys-Gly) (interchain with G-Cter in SUMO2) linkage. Serine 911, serine 947, serine 956, serine 1017, and serine 1019 each carry phosphoserine. Residues lysine 1056 and lysine 1063 each participate in a glycyl lysine isopeptide (Lys-Gly) (interchain with G-Cter in SUMO2) cross-link. Disordered regions lie at residues 1158–1219 and 1237–1258; these read KKPK…TTVS and PVSK…RSSN. The span at 1176–1187 shows a compositional bias: polar residues; the sequence is PSSSVRNEGQSD. Residues 1188–1205 are compositionally biased toward basic and acidic residues; the sequence is TNKRDLVGNDFKSIDRRT. A compositionally biased stretch (polar residues) spans 1206 to 1219; the sequence is STPNSRIQRATTVS. Serine 1330 carries the post-translational modification Phosphoserine. Glycyl lysine isopeptide (Lys-Gly) (interchain with G-Cter in SUMO2) cross-links involve residues lysine 1340 and lysine 1341. The disordered stretch occupies residues 1351 to 1385; sequence QRQIRPKSQKNRRRLSDCESTDVKRAGSHTAQNSD. Residues 1354–1363 show a composition bias toward basic residues; that stretch reads IRPKSQKNRR. The segment covering 1364-1375 has biased composition (basic and acidic residues); it reads RLSDCESTDVKR. The residue at position 1366 (serine 1366) is a Phosphoserine. Lysine 1415 participates in a covalent cross-link: Glycyl lysine isopeptide (Lys-Gly) (interchain with G-Cter in SUMO2). Residue serine 1489 is modified to Phosphoserine. The disordered stretch occupies residues 1579–1604; it reads FRKPGLPPPASKPLRPTTKIFSSKST. Phosphoserine is present on residues serine 1621, serine 1623, and serine 1663. ATP is bound at residue 1963–1970; the sequence is GPPGTGKS. Residues 2070 to 2087 carry the Bipartite nuclear localization signal motif; it reads KKELPSHVQAMHKRKEFL. The stretch at 2105 to 2136 forms a coiled coil; sequence REIQRQELDENISKVSKERQELASKIKEVQGR. Threonine 2474 carries the post-translational modification Phosphothreonine. Disordered stretches follow at residues 2474–2496, 2556–2577, and 2597–2677; these read THPP…SKLD, WDPQ…EPGF, and LSSH…RKLL. The segment covering 2560–2573 has biased composition (pro residues); the sequence is PSSPQHPGATPPTG. Basic and acidic residues predominate over residues 2628–2671; the sequence is ELCHRREARAFSEGEQEKCGSETHHTRRNSRWDKRTLEQEDSSS. The tract at residues 2661–2677 is necessary for nuclear localization; that stretch reads KRTLEQEDSSSKKRKLL.

This sequence belongs to the DNA2/NAM7 helicase family. Homodimer. Interacts with PER2; the interaction inhibits termination of circadian target genes. Interacts with CHD4, POLR2A, PRKDC and TRIM28. Interacts with UBE2I. Interacts (via N-terminus domain) with EXOSC9 (via C-terminus region); the interaction enhances SETX sumoylation. Interacts with NCL (via N-terminus domain). Interacts with PABPN1, PABPC1 and SF3B1. Interacts with SMN1/SMN2 and POLR2A; SMN1/SMN2 recruits SETX to POLR2A. Post-translationally, ubiquitinated. Sumoylated preferentially with SUMO2 or SUMO3. As to expression, highly expressed in skeletal muscle. Expressed in heart, fibroblast, placenta and liver. Weakly expressed in brain and lung. Expressed in the cortex of the kidney (highly expressed in tubular epithelial cells but low expression in the glomerulus).

It localises to the nucleus. It is found in the nucleoplasm. Its subcellular location is the nucleolus. The protein localises to the cytoplasm. The protein resides in the chromosome. It localises to the telomere. It is found in the cell projection. Its subcellular location is the axon. The protein localises to the growth cone. Functionally, probable RNA/DNA helicase involved in diverse aspects of RNA metabolism and genomic integrity. Plays a role in transcription regulation by its ability to modulate RNA Polymerase II (Pol II) binding to chromatin and through its interaction with proteins involved in transcription. Contributes to the mRNA splicing efficiency and splice site selection. Required for the resolution of R-loop RNA-DNA hybrid formation at G-rich pause sites located downstream of the poly(A) site, allowing XRN2 recruitment and XRN2-mediated degradation of the downstream cleaved RNA and hence efficient RNA polymerase II (RNAp II) transcription termination. Required for the 3' transcriptional termination of PER1 and CRY2, thus playing an important role in the circadian rhythm regulation. Involved in DNA double-strand breaks damage response generated by oxidative stress. In association with RRP45, targets the RNA exosome complex to sites of transcription-induced DNA damage. Plays a role in the development and maturation of germ cells: essential for male meiosis, acting at the interface of transcription and meiotic recombination, and in the process of gene silencing during meiotic sex chromosome inactivation (MSCI). May be involved in telomeric stability through the regulation of telomere repeat-containing RNA (TERRA) transcription. Plays a role in neurite outgrowth in hippocampal cells through FGF8-activated signaling pathways. Inhibits retinoic acid-induced apoptosis. This Homo sapiens (Human) protein is Probable helicase senataxin.